Reading from the N-terminus, the 331-residue chain is Tetraacyldisaccharide 4'-kinase (331 aa).

60–67 (TIGGTGKT) is a binding site for ATP.

This sequence belongs to the LpxK family.

It carries out the reaction a lipid A disaccharide + ATP = a lipid IVA + ADP + H(+). Its pathway is glycolipid biosynthesis; lipid IV(A) biosynthesis; lipid IV(A) from (3R)-3-hydroxytetradecanoyl-[acyl-carrier-protein] and UDP-N-acetyl-alpha-D-glucosamine: step 6/6. In terms of biological role, transfers the gamma-phosphate of ATP to the 4'-position of a tetraacyldisaccharide 1-phosphate intermediate (termed DS-1-P) to form tetraacyldisaccharide 1,4'-bis-phosphate (lipid IVA). This chain is Tetraacyldisaccharide 4'-kinase, found in Pseudomonas syringae pv. tomato (strain ATCC BAA-871 / DC3000).